The following is a 142-amino-acid chain: Large ribosomal subunit protein uL13 (142 aa).

Belongs to the universal ribosomal protein uL13 family. Part of the 50S ribosomal subunit.

In terms of biological role, this protein is one of the early assembly proteins of the 50S ribosomal subunit, although it is not seen to bind rRNA by itself. It is important during the early stages of 50S assembly. The sequence is that of Large ribosomal subunit protein uL13 from Aromatoleum aromaticum (strain DSM 19018 / LMG 30748 / EbN1) (Azoarcus sp. (strain EbN1)).